Consider the following 339-residue polypeptide: MTVRVAINGFGRIGRNVVRALYESGRRAEITVVAINELADAAGMAHLLKYDTSHGRFAWEVRQERDQLFVGDDAIRVLHERSLQSLPWRELGVDVVLDCTGVYGSREHGEAHIAAGAKKVLFSHPGSNDLDTTVVYGVNQDQLRAEHRIVSNASCTTNCIIPVIKLLDDAYGIESGTVTTIHSAMHDQQVIDAYHPDLRRTRAASQSIIPVDTKLAAGITRFFPQFNDRFEAIAVRVPTINVTAIDLSVTVKKPVKANEVNLLLQKAAQGAFHGIVDYAELPLVSVDFNHDPHSAIVDGTQTRVSGAHLIKTLVWCDNEWGFANRMLDTTLAMATVAFR.

Residues 12–13 (RI) and Arg-81 each bind NAD(+). Residues 154–156 (SCT), Arg-200, 213–214 (TK), and Arg-236 contribute to the substrate site. Cys-155 serves as the catalytic Nucleophile. NAD(+) is bound at residue Asn-318.

The protein belongs to the glyceraldehyde-3-phosphate dehydrogenase family. Epd subfamily. As to quaternary structure, homotetramer.

It is found in the cytoplasm. The enzyme catalyses D-erythrose 4-phosphate + NAD(+) + H2O = 4-phospho-D-erythronate + NADH + 2 H(+). It participates in cofactor biosynthesis; pyridoxine 5'-phosphate biosynthesis; pyridoxine 5'-phosphate from D-erythrose 4-phosphate: step 1/5. Its function is as follows. Catalyzes the NAD-dependent conversion of D-erythrose 4-phosphate to 4-phosphoerythronate. In Escherichia coli O45:K1 (strain S88 / ExPEC), this protein is D-erythrose-4-phosphate dehydrogenase.